Reading from the N-terminus, the 252-residue chain is Triosephosphate isomerase (252 aa).

Substrate is bound at residue asparagine 10 to lysine 12. Histidine 96 (electrophile) is an active-site residue. The active-site Proton acceptor is the glutamate 168. Residues glycine 174, serine 214, and glycine 235–glycine 236 contribute to the substrate site.

The protein belongs to the triosephosphate isomerase family. Homodimer.

The protein resides in the cytoplasm. It carries out the reaction D-glyceraldehyde 3-phosphate = dihydroxyacetone phosphate. It participates in carbohydrate biosynthesis; gluconeogenesis. Its pathway is carbohydrate degradation; glycolysis; D-glyceraldehyde 3-phosphate from glycerone phosphate: step 1/1. In terms of biological role, involved in the gluconeogenesis. Catalyzes stereospecifically the conversion of dihydroxyacetone phosphate (DHAP) to D-glyceraldehyde-3-phosphate (G3P). The protein is Triosephosphate isomerase of Streptococcus thermophilus (strain CNRZ 1066).